The primary structure comprises 324 residues: UDP-N-acetylenolpyruvoylglucosamine reductase (324 aa).

The 194-residue stretch at 38–231 (AGGSARRLYV…SRERIRSLLK (194 aa)) folds into the FAD-binding PCMH-type domain. The active site involves Arg-195. The active-site Proton donor is the Ser-246. The active site involves Glu-316.

Belongs to the MurB family. The cofactor is FAD.

The protein localises to the cytoplasm. The enzyme catalyses UDP-N-acetyl-alpha-D-muramate + NADP(+) = UDP-N-acetyl-3-O-(1-carboxyvinyl)-alpha-D-glucosamine + NADPH + H(+). The protein operates within cell wall biogenesis; peptidoglycan biosynthesis. In terms of biological role, cell wall formation. This is UDP-N-acetylenolpyruvoylglucosamine reductase from Thiobacillus denitrificans (strain ATCC 25259 / T1).